Consider the following 255-residue polypeptide: AA9 family lytic polysaccharide monooxygenase D (255 aa).

An N-terminal signal peptide occupies residues Met1 to Gly19. Cu(2+)-binding residues include His18 and His92. Cystine bridges form between Cys65–Cys189 and Cys104–Cys111. Asn152 is a glycosylation site (N-linked (GlcNAc...) asparagine). O2-binding residues include His178 and Gln184. Position 186 (Tyr186) interacts with Cu(2+). Asn220 carries an N-linked (GlcNAc...) asparagine glycan.

This sequence belongs to the polysaccharide monooxygenase AA9 family. The cofactor is Cu(2+).

The protein localises to the secreted. It catalyses the reaction [(1-&gt;4)-beta-D-glucosyl]n+m + reduced acceptor + O2 = 4-dehydro-beta-D-glucosyl-[(1-&gt;4)-beta-D-glucosyl]n-1 + [(1-&gt;4)-beta-D-glucosyl]m + acceptor + H2O.. Lytic polysaccharide monooxygenase (LPMO) that depolymerizes crystalline and amorphous polysaccharides via the oxidation of scissile alpha- or beta-(1-4)-glycosidic bonds, yielding specifically C1 oxidation product. Catalysis by LPMOs requires the reduction of the active-site copper from Cu(II) to Cu(I) by a reducing agent and H(2)O(2) or O(2) as a cosubstrate. Is active on regenerated amorphous cellulose (RAC) in the presence of ascorbic acid or 3-methylcatechol. Also acts on phosphoric acid swollen cellulose (PASC) as a substrate. This chain is AA9 family lytic polysaccharide monooxygenase D, found in Thermothelomyces thermophilus (strain ATCC 42464 / BCRC 31852 / DSM 1799) (Sporotrichum thermophile).